Consider the following 259-residue polypeptide: Hydroxyacylglutathione hydrolase (259 aa).

Residues histidine 56, histidine 58, aspartate 60, histidine 61, histidine 112, aspartate 133, and histidine 171 each coordinate Zn(2+).

It belongs to the metallo-beta-lactamase superfamily. Glyoxalase II family. As to quaternary structure, monomer. Zn(2+) serves as cofactor.

It carries out the reaction an S-(2-hydroxyacyl)glutathione + H2O = a 2-hydroxy carboxylate + glutathione + H(+). It participates in secondary metabolite metabolism; methylglyoxal degradation; (R)-lactate from methylglyoxal: step 2/2. Thiolesterase that catalyzes the hydrolysis of S-D-lactoyl-glutathione to form glutathione and D-lactic acid. The sequence is that of Hydroxyacylglutathione hydrolase from Pseudomonas putida (strain GB-1).